The chain runs to 1180 residues: Tudor domain-containing protein 1 (1180 aa).

Disordered stretches follow at residues 1–66 (MSVK…KKNN) and 79–138 (SQED…RPAK). Residues 27–41 (NFEKNENKLPPHESL) show a composition bias toward basic and acidic residues. Polar residues-rich tracts occupy residues 79-91 (SQED…NPNG) and 110-122 (NSVS…SNSP). Residues Cys-170, Cys-173, Cys-181, Cys-184, Cys-190, Cys-194, His-202, and Cys-206 each contribute to the Zn(2+) site. Residues 170–206 (CHRCGLFGSLRCSQCKQTYYCSTACQRRDWSAHSIVC) form an MYND-type zinc finger. Residues 312 to 372 (IPVKGEVCIA…YHLNRNIDLF (61 aa)) form the Tudor 1 domain. Positions 450-469 (SGQDSKKENADQSDPEDVGK) are disordered. Tudor domains are found at residues 541–600 (YPAI…LLEL), 762–821 (KAEI…FLNL), and 990–1048 (RPRI…HLAL).

Belongs to the TDRD1 family. As to quaternary structure, found in a mRNP complex, at least composed of TDRD1, TDRD6, TDRD7 and DDX4. Interacts with MAEL. Interacts with PIWIL1, PIWIL2 and PIWIL4 (when methylated on arginine residues). Interacts with TDRD12. In terms of tissue distribution, testis and ovary specific. Also expressed in several cancers.

Its subcellular location is the cytoplasm. Plays a central role during spermatogenesis by participating in the repression transposable elements and preventing their mobilization, which is essential for the germline integrity. Acts via the piRNA metabolic process, which mediates the repression of transposable elements during meiosis by forming complexes composed of piRNAs and Piwi proteins and governs the methylation and subsequent repression of transposons. Required for the localization of Piwi proteins to the meiotic nuage. Involved in the piRNA metabolic process by ensuring the entry of correct transcripts into the normal piRNA pool and limiting the entry of cellular transcripts into the piRNA pathway. May act by allowing the recruitment of piRNA biogenesis or loading factors that ensure the correct entry of transcripts and piRNAs into Piwi proteins. The polypeptide is Tudor domain-containing protein 1 (TDRD1) (Homo sapiens (Human)).